Here is a 258-residue protein sequence, read N- to C-terminus: Ribosomal RNA small subunit methyltransferase J (258 aa).

S-adenosyl-L-methionine-binding positions include 104 to 105 (RD), 120 to 121 (ER), and D175.

It belongs to the methyltransferase superfamily. RsmJ family.

The protein localises to the cytoplasm. It carries out the reaction guanosine(1516) in 16S rRNA + S-adenosyl-L-methionine = N(2)-methylguanosine(1516) in 16S rRNA + S-adenosyl-L-homocysteine + H(+). Functionally, specifically methylates the guanosine in position 1516 of 16S rRNA. This chain is Ribosomal RNA small subunit methyltransferase J, found in Chromobacterium violaceum (strain ATCC 12472 / DSM 30191 / JCM 1249 / CCUG 213 / NBRC 12614 / NCIMB 9131 / NCTC 9757 / MK).